The chain runs to 148 residues: UPF0260 protein mll2411 (148 aa).

The protein belongs to the UPF0260 family.

The chain is UPF0260 protein mll2411 from Mesorhizobium japonicum (strain LMG 29417 / CECT 9101 / MAFF 303099) (Mesorhizobium loti (strain MAFF 303099)).